Consider the following 534-residue polypeptide: MKQYKLMQVALLAILLFGWAGCSQNEEEVPGNVRNGIVLNVTDTGIISNEPSTRTEDTGFVTTFTQGDQIGLFAVKDGAILDEINNMPFTFNGSSWSGKPILYDDRLVGVNFYAYYPYQSEMTGKTDLIGDDFFAPLAAGWELTTEQSDQKAYAKQDLMTSNATALIGENGNYSLSFQLTHRMSLVVVKLPSTRYIFTDAEGVAMPEETPYVAMSVDVAFYLDNVEEGTKISPYYDAKKDEYRLLRKPSSENQIIGHYNDKQCTLDTAEKMKEGKYKRFVVDGGYKEVTHHLQVGDYYYADGSVVSGNEAEPAKDNCIGIVCWVGNPMPSVLYKDVAGTPYTATNDALLRSHPNCVHGLVMSLYTETGKFSPALTQSIHDWFMTTSFTSSYVSVTGYYDANENNKNKPLRFLGYNNSEVLDLYYDTFKTDFECFQYQDDCESSFPSPSITTGWYVPSSGELVALQDKDNSLESKLNTKLIKVSDKTMDISATYWSSTERNNKNMYIVTYSKTAGSAGTGGVKTNTYTYRFFLGF.

Residues 1-21 (MKQYKLMQVALLAILLFGWAG) form the signal peptide. Cysteine 22 is lipidated: N-palmitoyl cysteine. The S-diacylglycerol cysteine moiety is linked to residue cysteine 22. Residues 22 to 54 (CSQNEEEVPGNVRNGIVLNVTDTGIISNEPSTR) constitute a propeptide that is removed on maturation.

This sequence belongs to the bacteroidetes fimbrillin superfamily. Mfa-like family. May be part of the fimbrial tip.

The protein localises to the fimbrium. It is found in the cell outer membrane. Functionally, probably a component of the fimbrium tip. Fimbriae are filamentous appendages on the cell surface that mediate cell adhesion and biofilm formation. The sequence is that of Putative fimbrium tip subunit Fim1C from Bacteroides ovatus (strain ATCC 8483 / DSM 1896 / JCM 5824 / BCRC 10623 / CCUG 4943 / NCTC 11153).